A 74-amino-acid polypeptide reads, in one-letter code: ATP synthase subunit c (74 aa).

2 helical membrane passes run L5–G25 and L49–L69.

Belongs to the ATPase C chain family. F-type ATPases have 2 components, F(1) - the catalytic core - and F(0) - the membrane proton channel. F(1) has five subunits: alpha(3), beta(3), gamma(1), delta(1), epsilon(1). F(0) has three main subunits: a(1), b(2) and c(10-14). The alpha and beta chains form an alternating ring which encloses part of the gamma chain. F(1) is attached to F(0) by a central stalk formed by the gamma and epsilon chains, while a peripheral stalk is formed by the delta and b chains.

The protein localises to the cell inner membrane. F(1)F(0) ATP synthase produces ATP from ADP in the presence of a proton or sodium gradient. F-type ATPases consist of two structural domains, F(1) containing the extramembraneous catalytic core and F(0) containing the membrane proton channel, linked together by a central stalk and a peripheral stalk. During catalysis, ATP synthesis in the catalytic domain of F(1) is coupled via a rotary mechanism of the central stalk subunits to proton translocation. Its function is as follows. Key component of the F(0) channel; it plays a direct role in translocation across the membrane. A homomeric c-ring of between 10-14 subunits forms the central stalk rotor element with the F(1) delta and epsilon subunits. This chain is ATP synthase subunit c, found in Ruegeria sp. (strain TM1040) (Silicibacter sp.).